A 454-amino-acid chain; its full sequence is OTU domain-containing protein 1 (454 aa).

Disordered regions lie at residues 36–64 (QSASPAAAAPEPDTGERPPAAATEPREAA) and 116–257 (LPPP…SRAD). Positions 52–64 (RPPAAATEPREAA) are enriched in low complexity. Positions 116–125 (LPPPSAPSPP) are enriched in pro residues. Composition is skewed to basic and acidic residues over residues 151–164 (DAPDRNFRLSEHRQ), 193–210 (GEERRAERSSRGWDRASG), and 219–229 (ALRRQDPEAEA). The OTU domain maps to 282–411 (KYRFHIIPDG…NGHYDAVFDH (130 aa)). The cys-loop stretch occupies residues 287 to 293 (IIPDGNC). The active site involves aspartate 290. The active-site Nucleophile is the cysteine 293. The interval 342 to 352 (AAQDGAWAGYP) is his-loop. The tract at residues 399–404 (WLSNGH) is variable-loop. Histidine 404 is a catalytic residue. The UIM domain occupies 430–449 (KRDEELAKSMAISLSKMYIE).

It carries out the reaction Thiol-dependent hydrolysis of ester, thioester, amide, peptide and isopeptide bonds formed by the C-terminal Gly of ubiquitin (a 76-residue protein attached to proteins as an intracellular targeting signal).. Its function is as follows. Deubiquitinating enzyme that specifically hydrolyzes 'Lys-63'-linked polyubiquitin to monoubiquitin. Required for the stability and translation of a subset mRNAs with a high abundance of rare codons by mediating deubiquitination of 40S ribosomal protein RPS10/eS10, thereby antagonizing ZNF598-mediated 40S ubiquitination. The abundance of rare codons in mRNAs can limit the translation rate and can lead to ribosome collisions that trigger activation of ribosome quality control (RQC) pathway by ZNF598. OTUD1-mediated deubiquitination prevents activation of the RQC and subsequent dissociation of ribosomes and stimulates formation of polysomes and translation. The sequence is that of OTU domain-containing protein 1 (Otud1) from Mus musculus (Mouse).